A 212-amino-acid chain; its full sequence is Ion-translocating oxidoreductase complex subunit G (212 aa).

The helical transmembrane segment at 9-29 (GLLLGLFALLCTGLVAIVNQL) threads the bilayer. T176 is modified (FMN phosphoryl threonine).

The protein belongs to the RnfG family. In terms of assembly, the complex is composed of six subunits: RnfA, RnfB, RnfC, RnfD, RnfE and RnfG. FMN serves as cofactor.

Its subcellular location is the cell inner membrane. Functionally, part of a membrane-bound complex that couples electron transfer with translocation of ions across the membrane. The sequence is that of Ion-translocating oxidoreductase complex subunit G from Shewanella piezotolerans (strain WP3 / JCM 13877).